The sequence spans 67 residues: UPF0337 protein msl9551 (67 aa).

It belongs to the UPF0337 (CsbD) family.

This is UPF0337 protein msl9551 from Mesorhizobium japonicum (strain LMG 29417 / CECT 9101 / MAFF 303099) (Mesorhizobium loti (strain MAFF 303099)).